The primary structure comprises 467 residues: Glutamate--tRNA ligase (467 aa).

The short motif at 10-20 (PSPTGHLHIGG) is the 'HIGH' region element. Cys-99, Cys-101, Cys-126, and Glu-128 together coordinate Zn(2+). Positions 236–240 (RLSKR) match the 'KMSKS' region motif. ATP is bound at residue Lys-239.

This sequence belongs to the class-I aminoacyl-tRNA synthetase family. Glutamate--tRNA ligase type 1 subfamily. As to quaternary structure, monomer. The cofactor is Zn(2+).

The protein localises to the cytoplasm. The catalysed reaction is tRNA(Glu) + L-glutamate + ATP = L-glutamyl-tRNA(Glu) + AMP + diphosphate. In terms of biological role, catalyzes the attachment of glutamate to tRNA(Glu) in a two-step reaction: glutamate is first activated by ATP to form Glu-AMP and then transferred to the acceptor end of tRNA(Glu). This Desulfosudis oleivorans (strain DSM 6200 / JCM 39069 / Hxd3) (Desulfococcus oleovorans) protein is Glutamate--tRNA ligase.